Reading from the N-terminus, the 151-residue chain is Ribonuclease H (151 aa).

The region spanning 2-143 (SDDWVEIYTD…ADLLANRGVV (142 aa)) is the RNase H type-1 domain. Mg(2+)-binding residues include aspartate 11, glutamate 49, aspartate 71, and aspartate 135.

The protein belongs to the RNase H family. Monomer. Requires Mg(2+) as cofactor.

The protein resides in the cytoplasm. It carries out the reaction Endonucleolytic cleavage to 5'-phosphomonoester.. Endonuclease that specifically degrades the RNA of RNA-DNA hybrids. This chain is Ribonuclease H, found in Stutzerimonas stutzeri (strain A1501) (Pseudomonas stutzeri).